Here is an 878-residue protein sequence, read N- to C-terminus: Bifunctional heparan sulfate N-deacetylase/N-sulfotransferase 1 (878 aa).

Residues 1 to 17 (MSLSLKTRRFGRPVRPQ) are Cytoplasmic-facing. A sufficient for localization to Golgi membrane region spans residues 1–169 (MSLSLKTRRF…VEYGVGIIGF (169 aa)). Residues 18–38 (LVLLLLFALCLLSVFISAYYL) traverse the membrane as a helical; Signal-anchor for type II membrane protein segment. The Lumenal segment spans residues 39 to 878 (YGWKRGLEPS…WLREELQSTR (840 aa)). The heparan sulfate N-deacetylase 1 stretch occupies residues 40-594 (GWKRGLEPSG…KRHKDIWSKE (555 aa)). Residues 47-71 (PSGSEAQSPDCDEPKISPSRLLPMK) are disordered. Residues asparagine 231, asparagine 347, and asparagine 397 are each glycosylated (N-linked (GlcNAc...) asparagine). The tract at residues 595–878 (KTCDRFPKLL…WLREELQSTR (284 aa)) is heparan sulfate N-sulfotransferase 1. Lysine 610 (for sulfotransferase activity) is an active-site residue. 610 to 614 (KTGTT) is a binding site for adenosine 3',5'-bisphosphate. An N-linked (GlcNAc...) asparagine glycan is attached at asparagine 663. The adenosine 3',5'-bisphosphate site is built by serine 708 and tryptophan 813. A disulfide bridge connects residues cysteine 814 and cysteine 824. 829-833 (KGRKY) lines the adenosine 3',5'-bisphosphate pocket.

Belongs to the sulfotransferase 1 family. NDST subfamily. In terms of assembly, monomer.

It is found in the golgi apparatus membrane. The protein localises to the golgi apparatus. Its subcellular location is the trans-Golgi network membrane. It catalyses the reaction alpha-D-glucosaminyl-[heparan sulfate](n) + 3'-phosphoadenylyl sulfate = N-sulfo-alpha-D-glucosaminyl-[heparan sulfate](n) + adenosine 3',5'-bisphosphate + 2 H(+). It participates in glycan metabolism; heparan sulfate biosynthesis. It functions in the pathway glycan metabolism; heparin biosynthesis. Its function is as follows. Essential bifunctional enzyme that catalyzes both the N-deacetylation and the N-sulfation of glucosamine (GlcNAc) of the glycosaminoglycan in heparan sulfate. Modifies the GlcNAc-GlcA disaccharide repeating sugar backbone to make N-sulfated heparosan, a prerequisite substrate for later modifications in heparin biosynthesis. Plays a role in determining the extent and pattern of sulfation of heparan sulfate. This is Bifunctional heparan sulfate N-deacetylase/N-sulfotransferase 1 (ndst1) from Xenopus tropicalis (Western clawed frog).